A 504-amino-acid chain; its full sequence is Maturase K (504 aa).

The protein belongs to the intron maturase 2 family. MatK subfamily.

It is found in the plastid. The protein resides in the chloroplast. In terms of biological role, usually encoded in the trnK tRNA gene intron. Probably assists in splicing its own and other chloroplast group II introns. The sequence is that of Maturase K from Quercus rubra (Northern red oak).